Consider the following 473-residue polypeptide: MTLFPIFADLTGRRVLVVGGGAVAVRKTQALLQAGAEVVVGAPRLDPALAALAEQGGIARLDGGFEPAWLAGAWLVVAATDDRAVNAAVSEAARARRVFCNVVDDAELSSFQVPSVVDRSPLIVAISSSGVAPVLARRLRERIESLFDHSLGQLAALAARYRPRIRAARPDLGQRRRFYDWLLDGPVAARLRQQQPGLAEQELEQALRAPQAAPRGSVVLVGAGPGDPGLLTLKALRALNEADIILYDRLVSEGVLALARRDAERVPVGKLPGEDHDATQARIHALMLAQARAGRRVVRLKGGDAFIFGRGGEELEYLRAHDVPYEVVPGITAALACAAYAGIPLTHRDHAQSVRMVTAHCRADQDTLDWAGLARDQQTLAFYMGVGQLDYVTARLLEHGRAPATPFALIENGSRPEQRVVTGTLAELPEIARRRSVRPPALLVIGEVAALADTLQWFGQHQHGLPGPQALAA.

The precorrin-2 dehydrogenase /sirohydrochlorin ferrochelatase stretch occupies residues 1–203; the sequence is MTLFPIFADL…QQPGLAEQEL (203 aa). NAD(+)-binding positions include 22 to 23 and 43 to 44; these read AV and PR. S128 carries the phosphoserine modification. The segment at 216–473 is uroporphyrinogen-III C-methyltransferase; it reads GSVVLVGAGP…GLPGPQALAA (258 aa). P225 serves as a coordination point for S-adenosyl-L-methionine. The Proton acceptor role is filled by D248. Catalysis depends on K270, which acts as the Proton donor. Residues 302 to 304, I307, 332 to 333, M384, and G413 contribute to the S-adenosyl-L-methionine site; these read GGD and TA.

The protein in the N-terminal section; belongs to the precorrin-2 dehydrogenase / sirohydrochlorin ferrochelatase family. In the C-terminal section; belongs to the precorrin methyltransferase family.

It carries out the reaction uroporphyrinogen III + 2 S-adenosyl-L-methionine = precorrin-2 + 2 S-adenosyl-L-homocysteine + H(+). It catalyses the reaction precorrin-2 + NAD(+) = sirohydrochlorin + NADH + 2 H(+). The catalysed reaction is siroheme + 2 H(+) = sirohydrochlorin + Fe(2+). It functions in the pathway cofactor biosynthesis; adenosylcobalamin biosynthesis; precorrin-2 from uroporphyrinogen III: step 1/1. Its pathway is cofactor biosynthesis; adenosylcobalamin biosynthesis; sirohydrochlorin from precorrin-2: step 1/1. The protein operates within porphyrin-containing compound metabolism; siroheme biosynthesis; precorrin-2 from uroporphyrinogen III: step 1/1. It participates in porphyrin-containing compound metabolism; siroheme biosynthesis; siroheme from sirohydrochlorin: step 1/1. It functions in the pathway porphyrin-containing compound metabolism; siroheme biosynthesis; sirohydrochlorin from precorrin-2: step 1/1. Multifunctional enzyme that catalyzes the SAM-dependent methylations of uroporphyrinogen III at position C-2 and C-7 to form precorrin-2 via precorrin-1. Then it catalyzes the NAD-dependent ring dehydrogenation of precorrin-2 to yield sirohydrochlorin. Finally, it catalyzes the ferrochelation of sirohydrochlorin to yield siroheme. The protein is Siroheme synthase of Bordetella parapertussis (strain 12822 / ATCC BAA-587 / NCTC 13253).